The following is a 492-amino-acid chain: Glycylpeptide N-tetradecanoyltransferase (492 aa).

The span at 1–22 (MSDSKDRKGKAPEGQSSEKKDG) shows a compositional bias: basic and acidic residues. The interval 1–45 (MSDSKDRKGKAPEGQSSEKKDGAVNITPQMAESLLENNPALRNET) is disordered. Tetradecanoyl-CoA contacts are provided by residues 82–85 (YKFW), 215–217 (LCI), and 223–227 (SKRLT). L492 serves as the catalytic Proton acceptor; via carboxylate.

This sequence belongs to the NMT family. Monomer.

The protein localises to the cytoplasm. The catalysed reaction is N-terminal glycyl-[protein] + tetradecanoyl-CoA = N-tetradecanoylglycyl-[protein] + CoA + H(+). Functionally, adds a myristoyl group to the N-terminal glycine residue of certain cellular proteins. The chain is Glycylpeptide N-tetradecanoyltransferase (nmt1) from Aspergillus fumigatus (strain ATCC MYA-4609 / CBS 101355 / FGSC A1100 / Af293) (Neosartorya fumigata).